Here is a 342-residue protein sequence, read N- to C-terminus: Holliday junction branch migration complex subunit RuvB (342 aa).

Residues 1–22 (MTLKPVREVSPGSQEGEERLEQ) form a disordered region. The large ATPase domain (RuvB-L) stretch occupies residues 1 to 185 (MTLKPVREVS…FPIQERLGYY (185 aa)). Residues Leu24, Arg25, Gly66, Lys69, Thr70, Ser71, 132-134 (EDY), Arg175, Tyr185, and Arg222 contribute to the ATP site. Residue Thr70 participates in Mg(2+) binding. The small ATPAse domain (RuvB-S) stretch occupies residues 186–256 (EPTELREIAV…IVETTLERLE (71 aa)). A head domain (RuvB-H) region spans residues 259 to 342 (GRGLDAMDRR…RPQGKQGSLI (84 aa)). DNA contacts are provided by Arg295, Arg314, and Arg319.

It belongs to the RuvB family. As to quaternary structure, homohexamer. Forms an RuvA(8)-RuvB(12)-Holliday junction (HJ) complex. HJ DNA is sandwiched between 2 RuvA tetramers; dsDNA enters through RuvA and exits via RuvB. An RuvB hexamer assembles on each DNA strand where it exits the tetramer. Each RuvB hexamer is contacted by two RuvA subunits (via domain III) on 2 adjacent RuvB subunits; this complex drives branch migration. In the full resolvosome a probable DNA-RuvA(4)-RuvB(12)-RuvC(2) complex forms which resolves the HJ.

The protein localises to the cytoplasm. It catalyses the reaction ATP + H2O = ADP + phosphate + H(+). In terms of biological role, the RuvA-RuvB-RuvC complex processes Holliday junction (HJ) DNA during genetic recombination and DNA repair, while the RuvA-RuvB complex plays an important role in the rescue of blocked DNA replication forks via replication fork reversal (RFR). RuvA specifically binds to HJ cruciform DNA, conferring on it an open structure. The RuvB hexamer acts as an ATP-dependent pump, pulling dsDNA into and through the RuvAB complex. RuvB forms 2 homohexamers on either side of HJ DNA bound by 1 or 2 RuvA tetramers; 4 subunits per hexamer contact DNA at a time. Coordinated motions by a converter formed by DNA-disengaged RuvB subunits stimulates ATP hydrolysis and nucleotide exchange. Immobilization of the converter enables RuvB to convert the ATP-contained energy into a lever motion, pulling 2 nucleotides of DNA out of the RuvA tetramer per ATP hydrolyzed, thus driving DNA branch migration. The RuvB motors rotate together with the DNA substrate, which together with the progressing nucleotide cycle form the mechanistic basis for DNA recombination by continuous HJ branch migration. Branch migration allows RuvC to scan DNA until it finds its consensus sequence, where it cleaves and resolves cruciform DNA. This Anaeromyxobacter sp. (strain Fw109-5) protein is Holliday junction branch migration complex subunit RuvB.